An 865-amino-acid polypeptide reads, in one-letter code: Alanine--tRNA ligase (865 aa).

Positions 554, 558, 656, and 660 each coordinate Zn(2+).

This sequence belongs to the class-II aminoacyl-tRNA synthetase family. It depends on Zn(2+) as a cofactor.

It localises to the cytoplasm. The catalysed reaction is tRNA(Ala) + L-alanine + ATP = L-alanyl-tRNA(Ala) + AMP + diphosphate. Functionally, catalyzes the attachment of alanine to tRNA(Ala) in a two-step reaction: alanine is first activated by ATP to form Ala-AMP and then transferred to the acceptor end of tRNA(Ala). Also edits incorrectly charged Ser-tRNA(Ala) and Gly-tRNA(Ala) via its editing domain. The protein is Alanine--tRNA ligase of Francisella tularensis subsp. holarctica (strain LVS).